The primary structure comprises 242 residues: Probable septum site-determining protein MinC (242 aa).

This sequence belongs to the MinC family. Interacts with MinD and FtsZ.

Functionally, cell division inhibitor that blocks the formation of polar Z ring septums. Rapidly oscillates between the poles of the cell to destabilize FtsZ filaments that have formed before they mature into polar Z rings. Prevents FtsZ polymerization. This is Probable septum site-determining protein MinC from Agrobacterium fabrum (strain C58 / ATCC 33970) (Agrobacterium tumefaciens (strain C58)).